A 179-amino-acid chain; its full sequence is Large ribosomal subunit protein uL6 (179 aa).

The protein belongs to the universal ribosomal protein uL6 family. Part of the 50S ribosomal subunit.

In terms of biological role, this protein binds to the 23S rRNA, and is important in its secondary structure. It is located near the subunit interface in the base of the L7/L12 stalk, and near the tRNA binding site of the peptidyltransferase center. The polypeptide is Large ribosomal subunit protein uL6 (Chlorobium phaeobacteroides (strain BS1)).